Consider the following 158-residue polypeptide: Transcription elongation factor GreA (158 aa).

The protein belongs to the GreA/GreB family.

In terms of biological role, necessary for efficient RNA polymerase transcription elongation past template-encoded arresting sites. The arresting sites in DNA have the property of trapping a certain fraction of elongating RNA polymerases that pass through, resulting in locked ternary complexes. Cleavage of the nascent transcript by cleavage factors such as GreA or GreB allows the resumption of elongation from the new 3'terminus. GreA releases sequences of 2 to 3 nucleotides. This Hamiltonella defensa subsp. Acyrthosiphon pisum (strain 5AT) protein is Transcription elongation factor GreA.